The sequence spans 40 residues: ALKEEFEEHAEKAKTLPENTSSENKLTLYGLYKQATVGNV.

Residues 1–15 (ALKEEFEEHAEKAKT) show a composition bias toward basic and acidic residues. Residues 1 to 25 (ALKEEFEEHAEKAKTLPENTSSENK) form a disordered region. Residues 2–40 (LKEEFEEHAEKAKTLPENTSSENKLTLYGLYKQATVGNV) form the ACB domain.

It belongs to the ACBP family.

It localises to the cytoplasm. Binds medium- and long-chain acyl-CoA esters with very high affinity and may function as an intracellular carrier of acyl-CoA esters. The chain is Acyl-CoA-binding protein 2 from Digitalis lanata (Grecian foxglove).